Here is a 446-residue protein sequence, read N- to C-terminus: Deoxyguanosinetriphosphate triphosphohydrolase-like protein (446 aa).

Residues 1–28 form a disordered region; the sequence is MSSSVWQERRHGEDKQRRNDHRSPFQRD. Positions 7-28 are enriched in basic and acidic residues; the sequence is QERRHGEDKQRRNDHRSPFQRD. The HD domain occupies 59 to 252; that stretch reads RLTHSLEVSQ…MELADDIAYA (194 aa).

The protein belongs to the dGTPase family. Type 2 subfamily.

This Shewanella sp. (strain MR-4) protein is Deoxyguanosinetriphosphate triphosphohydrolase-like protein.